Reading from the N-terminus, the 537-residue chain is Extracellular exo-inulinase inuE (537 aa).

A signal peptide spans 1-19; that stretch reads MARLLKAVTVCALAGIAHA. Residue aspartate 41 is part of the active site. N-linked (GlcNAc...) asparagine glycosylation is found at asparagine 49, asparagine 67, asparagine 112, asparagine 300, asparagine 363, asparagine 398, asparagine 430, and asparagine 531.

Belongs to the glycosyl hydrolase 32 family.

The protein resides in the secreted. It catalyses the reaction Hydrolysis of terminal, non-reducing (2-&gt;1)- and (2-&gt;6)-linked beta-D-fructofuranose residues in fructans.. Functionally, exo-inulinase involved in utilization of the plant storage polymer inulin, consisting of fructooligosaccharides with a degree of polymerization (DP) value from 2 to 60. Splits off terminal fructose units successively from the non-reducing end of the inulin molecule, and also hydrolyze sucrose and raffinose. In Aspergillus niger (strain ATCC MYA-4892 / CBS 513.88 / FGSC A1513), this protein is Extracellular exo-inulinase inuE (inuE).